We begin with the raw amino-acid sequence, 1412 residues long: DNA-directed RNA polymerase subunit beta' (1412 aa).

The Zn(2+) site is built by Cys70, Cys72, Cys85, and Cys88. 3 residues coordinate Mg(2+): Asp460, Asp462, and Asp464. Positions 814, 888, 895, and 898 each coordinate Zn(2+). The tract at residues 1378–1412 is disordered; it reads EREAARQLANPFEDAPVTVDADAPQSDAGQEGSAE.

Belongs to the RNA polymerase beta' chain family. In terms of assembly, the RNAP catalytic core consists of 2 alpha, 1 beta, 1 beta' and 1 omega subunit. When a sigma factor is associated with the core the holoenzyme is formed, which can initiate transcription. Requires Mg(2+) as cofactor. Zn(2+) is required as a cofactor.

It carries out the reaction RNA(n) + a ribonucleoside 5'-triphosphate = RNA(n+1) + diphosphate. DNA-dependent RNA polymerase catalyzes the transcription of DNA into RNA using the four ribonucleoside triphosphates as substrates. The sequence is that of DNA-directed RNA polymerase subunit beta' from Bordetella petrii (strain ATCC BAA-461 / DSM 12804 / CCUG 43448).